A 386-amino-acid chain; its full sequence is Antilisterial bacteriocin subtilosin biosynthesis protein AlbE (386 aa).

In terms of biological role, involved in the production of the bacteriocin subtilosin. The polypeptide is Antilisterial bacteriocin subtilosin biosynthesis protein AlbE (albE) (Bacillus subtilis).